A 242-amino-acid polypeptide reads, in one-letter code: 1-(5-phosphoribosyl)-5-[(5-phosphoribosylamino)methylideneamino] imidazole-4-carboxamide isomerase (242 aa).

The active-site Proton acceptor is the Asp-8. The Proton donor role is filled by Asp-129.

It belongs to the HisA/HisF family.

The protein resides in the cytoplasm. It catalyses the reaction 1-(5-phospho-beta-D-ribosyl)-5-[(5-phospho-beta-D-ribosylamino)methylideneamino]imidazole-4-carboxamide = 5-[(5-phospho-1-deoxy-D-ribulos-1-ylimino)methylamino]-1-(5-phospho-beta-D-ribosyl)imidazole-4-carboxamide. It participates in amino-acid biosynthesis; L-histidine biosynthesis; L-histidine from 5-phospho-alpha-D-ribose 1-diphosphate: step 4/9. The chain is 1-(5-phosphoribosyl)-5-[(5-phosphoribosylamino)methylideneamino] imidazole-4-carboxamide isomerase from Syntrophus aciditrophicus (strain SB).